We begin with the raw amino-acid sequence, 515 residues long: 2-isopropylmalate synthase (515 aa).

A Pyruvate carboxyltransferase domain is found at Val5–His267. 4 residues coordinate Mn(2+): Asp14, His202, His204, and Asn238. The regulatory domain stretch occupies residues Lys392–Val515.

The protein belongs to the alpha-IPM synthase/homocitrate synthase family. LeuA type 1 subfamily. As to quaternary structure, homodimer. It depends on Mn(2+) as a cofactor.

It is found in the cytoplasm. The catalysed reaction is 3-methyl-2-oxobutanoate + acetyl-CoA + H2O = (2S)-2-isopropylmalate + CoA + H(+). Its pathway is amino-acid biosynthesis; L-leucine biosynthesis; L-leucine from 3-methyl-2-oxobutanoate: step 1/4. In terms of biological role, catalyzes the condensation of the acetyl group of acetyl-CoA with 3-methyl-2-oxobutanoate (2-ketoisovalerate) to form 3-carboxy-3-hydroxy-4-methylpentanoate (2-isopropylmalate). This is 2-isopropylmalate synthase from Vibrio atlanticus (strain LGP32) (Vibrio splendidus (strain Mel32)).